The sequence spans 414 residues: Dual-specificity RNA methyltransferase RlmN (414 aa).

Residues 1-13 (MTSAVGISVPNTD) show a composition bias toward polar residues. Positions 1 to 22 (MTSAVGISVPNTDAQSSQSASQ) are disordered. Glu-124 functions as the Proton acceptor in the catalytic mechanism. In terms of domain architecture, Radical SAM core spans 134–377 (TGSRKTLCIS…CTIRQTRGDD (244 aa)). Residues Cys-141 and Cys-382 are joined by a disulfide bond. Residues Cys-148, Cys-152, and Cys-155 each contribute to the [4Fe-4S] cluster site. S-adenosyl-L-methionine-binding positions include 204-205 (GE), Ser-236, 258-260 (SLH), and Asn-339. The S-methylcysteine intermediate role is filled by Cys-382.

This sequence belongs to the radical SAM superfamily. RlmN family. [4Fe-4S] cluster is required as a cofactor.

The protein localises to the cytoplasm. It carries out the reaction adenosine(2503) in 23S rRNA + 2 reduced [2Fe-2S]-[ferredoxin] + 2 S-adenosyl-L-methionine = 2-methyladenosine(2503) in 23S rRNA + 5'-deoxyadenosine + L-methionine + 2 oxidized [2Fe-2S]-[ferredoxin] + S-adenosyl-L-homocysteine. The catalysed reaction is adenosine(37) in tRNA + 2 reduced [2Fe-2S]-[ferredoxin] + 2 S-adenosyl-L-methionine = 2-methyladenosine(37) in tRNA + 5'-deoxyadenosine + L-methionine + 2 oxidized [2Fe-2S]-[ferredoxin] + S-adenosyl-L-homocysteine. Its function is as follows. Specifically methylates position 2 of adenine 2503 in 23S rRNA and position 2 of adenine 37 in tRNAs. m2A2503 modification seems to play a crucial role in the proofreading step occurring at the peptidyl transferase center and thus would serve to optimize ribosomal fidelity. The polypeptide is Dual-specificity RNA methyltransferase RlmN (Acinetobacter baylyi (strain ATCC 33305 / BD413 / ADP1)).